We begin with the raw amino-acid sequence, 420 residues long: Putative movement protein (420 aa).

2 stretches are compositionally biased toward low complexity: residues 1–18 and 30–59; these read MPLT…TSFS and TSCS…GSCP. 6 disordered regions span residues 1–77, 137–181, 195–219, 235–281, 327–370, and 396–420; these read MPLT…TARP, SMSR…SARS, RPKT…STRT, IMSE…RPPP, PSAG…RPIQ, and LPPP…QPWP. A compositionally biased stretch (pro residues) spans 60–69; sequence KTPPGTPPLP. Residues 137 to 157 are compositionally biased toward polar residues; it reads SMSRRATQPPTTRSRVRPSTG. The span at 158-181 shows a compositional bias: low complexity; it reads SRPPVSPLVTSSSPSPFSTLSARS. The segment covering 253–263 has biased composition (polar residues); the sequence is GLRSASLSTAG. Residues 327-348 are compositionally biased toward low complexity; the sequence is PSAGSSPFTPTVSGCSASTSSA.

Its function is as follows. Cell-to-cell movement. This is Putative movement protein from Maize rayado fino virus (isolate Costa Rica/Guapiles) (MRFV).